Reading from the N-terminus, the 317-residue chain is Acetyl-coenzyme A carboxylase carboxyl transferase subunit alpha (317 aa).

The region spanning 41 to 291 (KVDKLLRSTY…SMALDSALRD (251 aa)) is the CoA carboxyltransferase C-terminal domain.

The protein belongs to the AccA family. Acetyl-CoA carboxylase is a heterohexamer composed of biotin carboxyl carrier protein (AccB), biotin carboxylase (AccC) and two subunits each of ACCase subunit alpha (AccA) and ACCase subunit beta (AccD).

It is found in the cytoplasm. It catalyses the reaction N(6)-carboxybiotinyl-L-lysyl-[protein] + acetyl-CoA = N(6)-biotinyl-L-lysyl-[protein] + malonyl-CoA. The protein operates within lipid metabolism; malonyl-CoA biosynthesis; malonyl-CoA from acetyl-CoA: step 1/1. Functionally, component of the acetyl coenzyme A carboxylase (ACC) complex. First, biotin carboxylase catalyzes the carboxylation of biotin on its carrier protein (BCCP) and then the CO(2) group is transferred by the carboxyltransferase to acetyl-CoA to form malonyl-CoA. The protein is Acetyl-coenzyme A carboxylase carboxyl transferase subunit alpha of Paramagnetospirillum magneticum (strain ATCC 700264 / AMB-1) (Magnetospirillum magneticum).